We begin with the raw amino-acid sequence, 89 residues long: Phosphocarrier protein HPr (89 aa).

An HPr domain is found at 2–89 (AKFSAIITDK…TMIDTALIQG (88 aa)). His15 acts as the Pros-phosphohistidine intermediate in catalysis. Ser46 carries the phosphoserine; by HPrK/P modification.

The protein belongs to the HPr family.

The protein resides in the cytoplasm. Phosphorylation on Ser-46 inhibits the phosphoryl transfer from enzyme I to HPr. Its function is as follows. General (non sugar-specific) component of the phosphoenolpyruvate-dependent sugar phosphotransferase system (sugar PTS). This major carbohydrate active-transport system catalyzes the phosphorylation of incoming sugar substrates concomitantly with their translocation across the cell membrane. The phosphoryl group from phosphoenolpyruvate (PEP) is transferred to the phosphoryl carrier protein HPr by enzyme I. Phospho-HPr then transfers it to the PTS EIIA domain. Functionally, P-Ser-HPr interacts with the catabolite control protein A (CcpA), forming a complex that binds to DNA at the catabolite response elements cre, operator sites preceding a large number of catabolite-regulated genes. Thus, P-Ser-HPr is a corepressor in carbon catabolite repression (CCR), a mechanism that allows bacteria to coordinate and optimize the utilization of available carbon sources. P-Ser-HPr also plays a role in inducer exclusion, in which it probably interacts with several non-PTS permeases and inhibits their transport activity. This is Phosphocarrier protein HPr (ptsH) from Mycoplasma capricolum subsp. capricolum (strain California kid / ATCC 27343 / NCTC 10154).